The sequence spans 51 residues: uncharacterized protein (51 aa).

The tract at residues 1-42 (MKMKTNKYMNMVRPAPPRRADPEGVRDPSTMGGGPNPFLRRS) is disordered.

The protein resides in the mitochondrion. This is an uncharacterized protein from Saccharomyces cerevisiae (strain ATCC 204508 / S288c) (Baker's yeast).